The following is a 296-amino-acid chain: MYLQLLKSLNRLHPRAWDFVQLSRMDRPIGIYLLLWPTLVAVWIAGNGSPSLKNVLIFALGVVLMRAAGCCINDFADRKVDGHVKRTADRPLASGRVKPREAVMLFALLVGVSFLLVLCTNATTVWLSFGAVALAFCYPFMKRYTYYPQVVLGAAYSWGIPMAFTAAGGELPASAWLLYIANLLWTVGYDTYYAMVDRDDDLKIGVKSTAILFGEADRVIILTLQLLSLGCLLLAGNRFDLGGWYHLGLLAAAACFAWEFWSTRKLDRESCFKAFLHNHWAGMLIFIGVVLDYALR.

A run of 8 helical transmembrane segments spans residues 28 to 48 (PIGI…AGNG), 55 to 75 (VLIF…INDF), 102 to 122 (AVML…CTNA), 145 to 167 (TYYP…FTAA), 174 to 196 (SAWL…YAMV), 219 to 239 (VIIL…GNRF), 241 to 261 (LGGW…WEFW), and 275 to 295 (FLHN…DYAL).

Belongs to the UbiA prenyltransferase family. Mg(2+) is required as a cofactor.

The protein localises to the cell inner membrane. It carries out the reaction all-trans-octaprenyl diphosphate + 4-hydroxybenzoate = 4-hydroxy-3-(all-trans-octaprenyl)benzoate + diphosphate. It participates in cofactor biosynthesis; ubiquinone biosynthesis. Functionally, catalyzes the prenylation of para-hydroxybenzoate (PHB) with an all-trans polyprenyl group. Mediates the second step in the final reaction sequence of ubiquinone-8 (UQ-8) biosynthesis, which is the condensation of the polyisoprenoid side chain with PHB, generating the first membrane-bound Q intermediate 3-octaprenyl-4-hydroxybenzoate. This is 4-hydroxybenzoate octaprenyltransferase from Pseudomonas entomophila (strain L48).